The chain runs to 716 residues: Pyruvate/proton symporter BtsT (716 aa).

The Cytoplasmic portion of the chain corresponds to 1 to 5 (MDTKK). The helical transmembrane segment at 6-26 (IFKHIPWVILGIIGAFCLAVV) threads the bilayer. Topologically, residues 27 to 30 (ALRR) are periplasmic. A helical transmembrane segment spans residues 31–51 (GEHISALWIVVASVSVYLVAY). At 52–88 (RYYSLYIAQKVMKLDPTRATPAVINNDGLNYVPTNRY) the chain is on the cytoplasmic side. The chain crosses the membrane as a helical span at residues 89–109 (VLFGHHFAAIAGAGPLVGPVL). Residues 110 to 119 (AAQMGYLPGT) lie on the Periplasmic side of the membrane. Residues 120–140 (LWLLAGVVLAGAVQDFMVLFI) traverse the membrane as a helical segment. Residues 141-163 (SSRRNGASLGEMIKEEMGPVPGT) lie on the Cytoplasmic side of the membrane. The helical transmembrane segment at 164 to 184 (IALFGCFLIMIIILAVLALIV) threads the bilayer. At 185–191 (VKALAES) the chain is on the periplasmic side. Residues 192-212 (PWGVFTVCSTVPIALFMGIYM) form a helical membrane-spanning segment. The Cytoplasmic portion of the chain corresponds to 213–222 (RFIRPGRVGE). The chain crosses the membrane as a helical span at residues 223 to 243 (VSVIGIVLLVASIYFGGVIAH). At 244-257 (DPYWGPALTFKDTT) the chain is on the periplasmic side. The chain crosses the membrane as a helical span at residues 258–278 (ITFALIGYAFVSALLPVWLIL). Topologically, residues 279 to 282 (APRD) are cytoplasmic. A helical membrane pass occupies residues 283–303 (YLATFLKIGVIVGLALGIVVL). The Periplasmic portion of the chain corresponds to 304–326 (NPELKMPAMTQYIDGTGPLWKGA). The chain crosses the membrane as a helical span at residues 327–347 (LFPFLFITIACGAVSGFHALI). The Cytoplasmic segment spans residues 348 to 374 (SSGTTPKLLANETDARFIGYGAMLMES). Residues 375–395 (FVAIMALVAASIIEPGLYFAM) traverse the membrane as a helical segment. Residues 396–484 (NTPPAGLGIT…HVFHKVLPMA (89 aa)) lie on the Periplasmic side of the membrane. The chain crosses the membrane as a helical span at residues 485–505 (DMGFWYHFGILFEALFILTAL). Topologically, residues 506-531 (DAGTRSGRFMLQDLLGNFIPFLKKTD) are cytoplasmic. The chain crosses the membrane as a helical span at residues 532–552 (SLVAGIIGTAGCVGLWGYLLY). Topologically, residues 553–568 (QGVVDPLGGVKSLWPL) are periplasmic. A helical membrane pass occupies residues 569-589 (FGISNQMLAAVALVLGTVVLI). The Cytoplasmic segment spans residues 590–596 (KMKRTQY). The chain crosses the membrane as a helical span at residues 597-617 (IWVTVVPAVWLLICTTWALGL). The Periplasmic portion of the chain corresponds to 618–668 (KLFSTNPQMEGFFYMASQYKEKIANGTDLTAQQIANMNHIVVNNYTNAGLS). Residues 669–689 (ILFLIVVYSIIFYGFKTWLAV) form a helical membrane-spanning segment. Over 690 to 716 (RNSDKRTDKETPYVPIPEGGVKISSHH) the chain is Cytoplasmic. Residues 696–716 (TDKETPYVPIPEGGVKISSHH) are disordered.

The protein belongs to the peptide transporter carbon starvation (CstA) (TC 2.A.114) family. In terms of assembly, interacts with BtsS and YpdA.

It localises to the cell inner membrane. The catalysed reaction is pyruvate(out) + H(+)(out) = pyruvate(in) + H(+)(in). Its activity is regulated as follows. Transport is inhibited by the protonophores 2,4-dinitrophenol (DNP) and carbonyl cyanide m-chlorophenyl hydrazone (CCCP), but not by ionophores such as valinomycin, nonactin and nigericin. Transports pyruvate with a high affinity and specificity. The process is driven by the proton motive force. Under nutrient limiting conditions, mediates the uptake of pyruvate, thus enabling it to be used as a carbon source for the growth and survival. Part of a nutrient-sensing regulatory network composed of the two-component regulatory systems BtsS/BtsR and YpdA/YpdB, and their respective target proteins, BtsT and YhjX. The polypeptide is Pyruvate/proton symporter BtsT (Escherichia coli (strain K12)).